A 250-amino-acid polypeptide reads, in one-letter code: Cell division protein ZapD (250 aa).

Belongs to the ZapD family. Interacts with FtsZ.

Its subcellular location is the cytoplasm. Its function is as follows. Cell division factor that enhances FtsZ-ring assembly. Directly interacts with FtsZ and promotes bundling of FtsZ protofilaments, with a reduction in FtsZ GTPase activity. This Yersinia pseudotuberculosis serotype O:1b (strain IP 31758) protein is Cell division protein ZapD.